The sequence spans 679 residues: Glycine--tRNA ligase beta subunit (679 aa).

Belongs to the class-II aminoacyl-tRNA synthetase family. Tetramer of two alpha and two beta subunits.

It localises to the cytoplasm. It catalyses the reaction tRNA(Gly) + glycine + ATP = glycyl-tRNA(Gly) + AMP + diphosphate. The sequence is that of Glycine--tRNA ligase beta subunit from Streptococcus agalactiae serotype V (strain ATCC BAA-611 / 2603 V/R).